We begin with the raw amino-acid sequence, 217 residues long: Small ribosomal subunit protein uS3 (217 aa).

The 69-residue stretch at Ile38–Lys106 folds into the KH type-2 domain.

The protein belongs to the universal ribosomal protein uS3 family. In terms of assembly, part of the 30S ribosomal subunit. Forms a tight complex with proteins S10 and S14.

Its function is as follows. Binds the lower part of the 30S subunit head. Binds mRNA in the 70S ribosome, positioning it for translation. This chain is Small ribosomal subunit protein uS3, found in Lactococcus lactis subsp. cremoris (strain MG1363).